We begin with the raw amino-acid sequence, 180 residues long: Protein Flattop (180 aa).

Residues 111-180 (PQISGKASGK…AGDKVLQAQS (70 aa)) form a disordered region.

This sequence belongs to the Flattop family.

It localises to the cytoplasm. The protein localises to the cytoskeleton. Its subcellular location is the cilium basal body. It is found in the cell projection. The protein resides in the cilium. It localises to the apical cell membrane. The protein localises to the cilium axoneme. Its function is as follows. Microtubule inner protein (MIP) part of the dynein-decorated doublet microtubules (DMTs) in cilia axoneme. Acts as a regulator of cilium basal body docking and positioning in mono- and multiciliated cells. Regulates basal body docking and cilia formation in multiciliated lung cells. Regulates kinocilium positioning and stereocilia bundle morphogenesis in the inner ear. The polypeptide is Protein Flattop (Xenopus laevis (African clawed frog)).